A 252-amino-acid polypeptide reads, in one-letter code: Chaplin-A (252 aa).

The N-terminal stretch at 1 to 20 (MVAAAAATGILSLCGSPALA) is a signal peptide. The 41-residue stretch at 31 to 71 (SPGAVSGNALQVPVDVPVNACGNTVDVIAALNPAFGNECEN) folds into the Chaplin 1 domain. 2 disordered regions span residues 71–121 (NASD…GNNA) and 150–224 (CEND…GSEG). The segment covering 86-108 (EDASSSSSSSTSASSSGSHADGA) has biased composition (low complexity). Residues 112–152 (SPGVGSGNNAQVPVDVPVNLCGNTVDVIAALNPVFGNKCEN) enclose the Chaplin 2 domain. The segment covering 153–165 (DAEEPPGYGEEEP) has biased composition (acidic residues). Residues 210–224 (QTEQPPALAETGSEG) are compositionally biased toward low complexity. Positions 217-221 (LAETG) match the LPXTG sorting signal motif. 2 consecutive propeptides (removed by sortase) follow at residues 219-252 (ETGSEGTLGAAAAGAVLIAGGAILYRRGRALSGR) and 221-252 (GSEGTLGAAAAGAVLIAGGAILYRRGRALSGR). T220 bears the Pentaglycyl murein peptidoglycan amidated threonine mark.

The protein belongs to the chaplin family. Long chaplin subfamily.

It is found in the secreted. It localises to the cell wall. Its function is as follows. One of 8 partially redundant surface-active proteins required for efficient formation of aerial mycelium; the short chaplins assemble into a hydrophobic, amyloidal fibrillar surface layer that envelopes and protects aerial hyphae and spores, presumably anchored to the long chaplins. Chaplins have an overlapping function with the surface-active SapB peptide; chaplins are essential on minimal medium while on rich medium both chaplins and SapB are required for efficient aerial hyphae formation. A minimal chaplin strain capable of forming aerial mycelium/hyphae on minimal medium contains ChpC, ChpE and ChpH. The strain also has restored rodlet formation on the hyphae surface. A second minimal chaplin strain with ChpA, ChpD and ChpE makes slightly less robust hyphae. The long chaplins (ChpA, ChpB, ChpC) are not absolutely necessary for short chaplin localization or rodlet formation, but probably play a role in initiating aerial hyphae development. Chaplins are also involved in cell attachment to a hydrophobic surface. In Streptomyces coelicolor (strain ATCC BAA-471 / A3(2) / M145), this protein is Chaplin-A.